The sequence spans 301 residues: Sulfate adenylyltransferase subunit 2 1 (301 aa).

It belongs to the PAPS reductase family. CysD subfamily. In terms of assembly, heterodimer composed of CysD, the smaller subunit, and CysN.

It carries out the reaction sulfate + ATP + H(+) = adenosine 5'-phosphosulfate + diphosphate. Its pathway is sulfur metabolism; hydrogen sulfide biosynthesis; sulfite from sulfate: step 1/3. With CysN forms the ATP sulfurylase (ATPS) that catalyzes the adenylation of sulfate producing adenosine 5'-phosphosulfate (APS) and diphosphate, the first enzymatic step in sulfur assimilation pathway. APS synthesis involves the formation of a high-energy phosphoric-sulfuric acid anhydride bond driven by GTP hydrolysis by CysN coupled to ATP hydrolysis by CysD. The polypeptide is Sulfate adenylyltransferase subunit 2 1 (Shewanella sediminis (strain HAW-EB3)).